Here is a 384-residue protein sequence, read N- to C-terminus: Succinyl-diaminopimelate desuccinylase (384 aa).

His71 lines the Zn(2+) pocket. Asp73 is an active-site residue. Asp104 contacts Zn(2+). Glu139 acts as the Proton acceptor in catalysis. 3 residues coordinate Zn(2+): Glu140, Glu168, and His357.

It belongs to the peptidase M20A family. DapE subfamily. As to quaternary structure, homodimer. The cofactor is Zn(2+). It depends on Co(2+) as a cofactor.

It catalyses the reaction N-succinyl-(2S,6S)-2,6-diaminopimelate + H2O = (2S,6S)-2,6-diaminopimelate + succinate. Its pathway is amino-acid biosynthesis; L-lysine biosynthesis via DAP pathway; LL-2,6-diaminopimelate from (S)-tetrahydrodipicolinate (succinylase route): step 3/3. Catalyzes the hydrolysis of N-succinyl-L,L-diaminopimelic acid (SDAP), forming succinate and LL-2,6-diaminopimelate (DAP), an intermediate involved in the bacterial biosynthesis of lysine and meso-diaminopimelic acid, an essential component of bacterial cell walls. The protein is Succinyl-diaminopimelate desuccinylase of Bradyrhizobium sp. (strain ORS 278).